Reading from the N-terminus, the 663-residue chain is UvrABC system protein B (663 aa).

The region spanning 30 to 417 (EGIKAGKRHQ…TDKMVEQIIR (388 aa)) is the Helicase ATP-binding domain. 43 to 50 (GATGTGKT) serves as a coordination point for ATP. The Beta-hairpin motif lies at 96 to 119 (YYDYYQPEAYVPSTDTFIEKDASI). The 167-residue stretch at 434-600 (QIDDLLSEIQ…TINKKIHDLI (167 aa)) folds into the Helicase C-terminal domain. Residues 627–662 (QKTIDNIEKEMKQAAKDLDFEKATELRDMLFELKAE) form the UVR domain.

It belongs to the UvrB family. As to quaternary structure, forms a heterotetramer with UvrA during the search for lesions. Interacts with UvrC in an incision complex.

It localises to the cytoplasm. The UvrABC repair system catalyzes the recognition and processing of DNA lesions. A damage recognition complex composed of 2 UvrA and 2 UvrB subunits scans DNA for abnormalities. Upon binding of the UvrA(2)B(2) complex to a putative damaged site, the DNA wraps around one UvrB monomer. DNA wrap is dependent on ATP binding by UvrB and probably causes local melting of the DNA helix, facilitating insertion of UvrB beta-hairpin between the DNA strands. Then UvrB probes one DNA strand for the presence of a lesion. If a lesion is found the UvrA subunits dissociate and the UvrB-DNA preincision complex is formed. This complex is subsequently bound by UvrC and the second UvrB is released. If no lesion is found, the DNA wraps around the other UvrB subunit that will check the other stand for damage. The sequence is that of UvrABC system protein B from Staphylococcus aureus (strain COL).